A 337-amino-acid chain; its full sequence is DNA-directed RNA polymerase subunit alpha (337 aa).

The segment at 1-233 (MIQKNWQELI…DQLSVFVNFK (233 aa)) is alpha N-terminal domain (alpha-NTD). An alpha C-terminal domain (alpha-CTD) region spans residues 249–337 (FNPALLKKVD…DLAKHYEDQY (89 aa)).

Belongs to the RNA polymerase alpha chain family. In terms of assembly, homodimer. The RNAP catalytic core consists of 2 alpha, 1 beta, 1 beta' and 1 omega subunit. When a sigma factor is associated with the core the holoenzyme is formed, which can initiate transcription.

It catalyses the reaction RNA(n) + a ribonucleoside 5'-triphosphate = RNA(n+1) + diphosphate. Its function is as follows. DNA-dependent RNA polymerase catalyzes the transcription of DNA into RNA using the four ribonucleoside triphosphates as substrates. In Bartonella bacilliformis (strain ATCC 35685 / KC583 / Herrer 020/F12,63), this protein is DNA-directed RNA polymerase subunit alpha.